The primary structure comprises 361 residues: Chorismate synthase (361 aa).

The NADP(+) site is built by arginine 48 and arginine 54. FMN contacts are provided by residues 131-133 (RSS), 243-244 (NA), glycine 287, 302-306 (KPTSS), and arginine 328.

This sequence belongs to the chorismate synthase family. As to quaternary structure, homotetramer. It depends on FMNH2 as a cofactor.

It carries out the reaction 5-O-(1-carboxyvinyl)-3-phosphoshikimate = chorismate + phosphate. It participates in metabolic intermediate biosynthesis; chorismate biosynthesis; chorismate from D-erythrose 4-phosphate and phosphoenolpyruvate: step 7/7. Catalyzes the anti-1,4-elimination of the C-3 phosphate and the C-6 proR hydrogen from 5-enolpyruvylshikimate-3-phosphate (EPSP) to yield chorismate, which is the branch point compound that serves as the starting substrate for the three terminal pathways of aromatic amino acid biosynthesis. This reaction introduces a second double bond into the aromatic ring system. The polypeptide is Chorismate synthase (Rhodopseudomonas palustris (strain HaA2)).